The following is a 389-amino-acid chain: Globin-like protein 6 (389 aa).

Over residues 1-15 the composition is skewed to polar residues; the sequence is MGNQSTKSTHGTTRV. Disordered regions lie at residues 1 to 38, 96 to 123, and 143 to 185; these read MGNQ…RSAS, RTSK…SVDS, and TVSS…SSNP. Over residues 16–25 the composition is skewed to basic residues; that stretch reads SHSKSAHHNS. One can recognise a Globin domain in the interval 196 to 347; it reads HLTQPQILFV…VTEQLKEGFQ (152 aa). Residues His254 and His286 each contribute to the heme b site. Residues 367-389 are disordered; it reads SSFEISTKTKQSDMKRFHTLDNM. Basic and acidic residues predominate over residues 376-389; sequence KQSDMKRFHTLDNM.

The protein belongs to the globin family. As to expression, expressed in the head and tail neurons and nerve cord.

Functionally, may play a role as physiological sensor for oxygen via redox signaling and/or electron transport. The polypeptide is Globin-like protein 6 (Caenorhabditis elegans).